The primary structure comprises 436 residues: GTPase Der (436 aa).

EngA-type G domains lie at 4 to 167 (PIVA…PDEA) and 175 to 351 (IRFS…DNHR). GTP-binding positions include 10 to 17 (GRPNVGKS), 57 to 61 (DTGGI), 119 to 122 (NKVD), 181 to 188 (GRPNVGKS), 229 to 233 (DTAGM), and 294 to 297 (NKWD). The KH-like domain occupies 352–436 (KRITSSTLND…PIKLIVRARK (85 aa)).

The protein belongs to the TRAFAC class TrmE-Era-EngA-EngB-Septin-like GTPase superfamily. EngA (Der) GTPase family. Associates with the 50S ribosomal subunit.

In terms of biological role, GTPase that plays an essential role in the late steps of ribosome biogenesis. The polypeptide is GTPase Der (Leuconostoc mesenteroides subsp. mesenteroides (strain ATCC 8293 / DSM 20343 / BCRC 11652 / CCM 1803 / JCM 6124 / NCDO 523 / NBRC 100496 / NCIMB 8023 / NCTC 12954 / NRRL B-1118 / 37Y)).